Reading from the N-terminus, the 316-residue chain is BTB/POZ domain-containing protein Y57A10B.3 (316 aa).

An N-terminal signal peptide occupies residues 1-21 (MSAMRRCTCFIICLLTSYTYG). N-linked (GlcNAc...) asparagine glycosylation is found at N91, N107, N118, N133, N191, and N260. One can recognise a BTB domain in the interval 158 to 226 (RDAVLIVEGK…VHSTATFPND (69 aa)).

The protein resides in the secreted. This chain is BTB/POZ domain-containing protein Y57A10B.3 (btb-14), found in Caenorhabditis elegans.